The sequence spans 217 residues: Ras-related protein RABA2c (217 aa).

Residues 19 to 27 (GDSGVGKSN), 38 to 44 (CLESKST), 67 to 71 (DTAGQ), 125 to 128 (NKSD), and 155 to 157 (SAL) each bind GTP. Residues 41 to 49 (SKSTIGVEF) carry the Effector region motif. Residues 195-217 (PGQGTTINVDDTSGGAKRACCSS) are disordered. S-geranylgeranyl cysteine attachment occurs at residues Cys214 and Cys215.

The protein belongs to the small GTPase superfamily. Rab family. Expressed in root tips.

Its subcellular location is the endosome membrane. It is found in the golgi apparatus. It localises to the trans-Golgi network membrane. Functionally, intracellular vesicle trafficking and protein transport. In Arabidopsis thaliana (Mouse-ear cress), this protein is Ras-related protein RABA2c (RABA2C).